The sequence spans 122 residues: MGYRKLGRTSDQRKAMLRDLATSLIISERIETTEARAKEVRSVVEKLITLGKKGDLASRRNAAKTLRNVEILNEDETTQTALQKLFGEIAERYTERQGGYTRILKQGPRRGDGAESVIIELV.

Belongs to the bacterial ribosomal protein bL17 family. As to quaternary structure, part of the 50S ribosomal subunit. Contacts protein L32.

In Staphylococcus aureus (strain Mu3 / ATCC 700698), this protein is Large ribosomal subunit protein bL17.